We begin with the raw amino-acid sequence, 239 residues long: Hydroxyacylglutathione hydrolase (239 aa).

7 residues coordinate Zn(2+): H54, H56, D58, H59, H112, D131, and H169.

It belongs to the metallo-beta-lactamase superfamily. Glyoxalase II family. Monomer. Requires Zn(2+) as cofactor.

It catalyses the reaction an S-(2-hydroxyacyl)glutathione + H2O = a 2-hydroxy carboxylate + glutathione + H(+). Its pathway is secondary metabolite metabolism; methylglyoxal degradation; (R)-lactate from methylglyoxal: step 2/2. Functionally, thiolesterase that catalyzes the hydrolysis of S-D-lactoyl-glutathione to form glutathione and D-lactic acid. The polypeptide is Hydroxyacylglutathione hydrolase (Pelagibacter ubique (strain HTCC1062)).